A 236-amino-acid chain; its full sequence is Peptidase E (236 aa).

Catalysis depends on charge relay system residues serine 122, aspartate 137, and histidine 159.

This sequence belongs to the peptidase S51 family.

The protein localises to the cytoplasm. It carries out the reaction Dipeptidase E catalyzes the hydrolysis of dipeptides Asp-|-Xaa. It does not act on peptides with N-terminal Glu, Asn or Gln, nor does it cleave isoaspartyl peptides.. In terms of biological role, hydrolyzes dipeptides containing N-terminal aspartate residues. May play a role in allowing the cell to use peptide aspartate to spare carbon otherwise required for the synthesis of the aspartate family of amino acids. This is Peptidase E from Shewanella putrefaciens (strain CN-32 / ATCC BAA-453).